We begin with the raw amino-acid sequence, 557 residues long: Potassium-transporting ATPase potassium-binding subunit (557 aa).

The next 12 membrane-spanning stretches (helical) occupy residues 5–25 (GFLLIATFLLVLMVLARPLGS), 63–83 (LCAILGLNMLGLAVLFFMLLG), 132–152 (GLTVQNFLSAASGIAVIFALI), 170–190 (LLRITLWVLVPVALLIALFFI), 253–273 (FVQMLAIFLIPTALCFAFGEV), 283–303 (LLWAMSVIFVICVGVVMWAEV), 329–349 (VLVSSLFAVVTTAASCGAVIA), 356–376 (ALGGMVPMWLMQIGEVVFGGV), 379–399 (GLYGMMLFVLLAVFIAGLMIG), 416–436 (LTALAILVTPTLVLMGAALAM), 484–504 (LLAFCMFVGRFGVIIPVMAIA), and 526–546 (LFVGLLIGTVLLVGALTFIPA).

This sequence belongs to the KdpA family. The system is composed of three essential subunits: KdpA, KdpB and KdpC.

The protein resides in the cell inner membrane. Functionally, part of the high-affinity ATP-driven potassium transport (or Kdp) system, which catalyzes the hydrolysis of ATP coupled with the electrogenic transport of potassium into the cytoplasm. This subunit binds the periplasmic potassium ions and delivers the ions to the membrane domain of KdpB through an intramembrane tunnel. This Escherichia coli O9:H4 (strain HS) protein is Potassium-transporting ATPase potassium-binding subunit.